A 222-amino-acid polypeptide reads, in one-letter code: Putative O-methyltransferase MAP_2558 (222 aa).

S-adenosyl-L-methionine-binding positions include Val49, Glu71, 73 to 74 (GT), Ser79, Asp97, and Ile98. Asp145 contributes to the substrate binding site. Asp147 serves as a coordination point for S-adenosyl-L-methionine.

This sequence belongs to the class I-like SAM-binding methyltransferase superfamily. Cation-dependent O-methyltransferase family.

The sequence is that of Putative O-methyltransferase MAP_2558 from Mycolicibacterium paratuberculosis (strain ATCC BAA-968 / K-10) (Mycobacterium paratuberculosis).